The following is a 180-amino-acid chain: Membrane protein UL121 (180 aa).

Residues 1–27 (MWGCGWSRILVLLLLMCMALMARGTYG) form the signal peptide. The helical transmembrane segment at 143–163 (LGLLYAVCLILSFSIVTAALW) threads the bilayer.

This sequence belongs to the HHV-5 UL121 protein family.

It is found in the host membrane. In Human cytomegalovirus (strain Merlin) (HHV-5), this protein is Membrane protein UL121 (UL121).